The following is a 473-amino-acid chain: Photosystem II CP43 reaction center protein (473 aa).

A propeptide spanning residues 1–14 (MKILYSLRRFYHVE) is cleaved from the precursor. T15 carries the post-translational modification N-acetylthreonine. Position 15 is a phosphothreonine (T15). The next 5 membrane-spanning stretches (helical) occupy residues 69–93 (LFEVAHFVPEKPMYEQGLILLPHLA), 134–155 (LLGPETLEESFPFFGYVWQDRN), 178–200 (KALYFGGVYDTWAPGGGDVRKIT), 255–275 (KPFAWARRAFVWSGEAYLSYS), and 291–312 (WFNNTAYPSEFYGPTGPEASQA). E367 contacts [CaMn4O5] cluster. The chain crosses the membrane as a helical span at residues 447-471 (RARAAAAGFEKGIDRDLEPVVYMTP).

The protein belongs to the PsbB/PsbC family. PsbC subfamily. In terms of assembly, PSII is composed of 1 copy each of membrane proteins PsbA, PsbB, PsbC, PsbD, PsbE, PsbF, PsbH, PsbI, PsbJ, PsbK, PsbL, PsbM, PsbT, PsbX, PsbY, PsbZ, Psb30/Ycf12, at least 3 peripheral proteins of the oxygen-evolving complex and a large number of cofactors. It forms dimeric complexes. It depends on Binds multiple chlorophylls and provides some of the ligands for the Ca-4Mn-5O cluster of the oxygen-evolving complex. It may also provide a ligand for a Cl- that is required for oxygen evolution. PSII binds additional chlorophylls, carotenoids and specific lipids. as a cofactor. Post-translationally, phosphorylated in both bundle sheath and mesophyll cells, phosphorylation increases when cells are grown under high rather than low light regimes (70 vs 900 umol photons/m-2/s).

The protein localises to the plastid. Its subcellular location is the chloroplast thylakoid membrane. Functionally, one of the components of the core complex of photosystem II (PSII). It binds chlorophyll and helps catalyze the primary light-induced photochemical processes of PSII. PSII is a light-driven water:plastoquinone oxidoreductase, using light energy to abstract electrons from H(2)O, generating O(2) and a proton gradient subsequently used for ATP formation. The chain is Photosystem II CP43 reaction center protein from Zea mays (Maize).